The following is a 154-amino-acid chain: Myoglobin (154 aa).

One can recognise a Globin domain in the interval 2–148 (GLSDGEWQLV…FRKDIAAKYK (147 aa)). Phosphoserine is present on serine 4. Histidine 65 contacts nitrite. O2 is bound at residue histidine 65. Threonine 68 is subject to Phosphothreonine. Histidine 94 is a binding site for heme b.

This sequence belongs to the globin family. As to quaternary structure, monomeric.

It localises to the cytoplasm. The protein localises to the sarcoplasm. It carries out the reaction Fe(III)-heme b-[protein] + nitric oxide + H2O = Fe(II)-heme b-[protein] + nitrite + 2 H(+). It catalyses the reaction H2O2 + AH2 = A + 2 H2O. Its function is as follows. Monomeric heme protein which primary function is to store oxygen and facilitate its diffusion within muscle tissues. Reversibly binds oxygen through a pentacoordinated heme iron and enables its timely and efficient release as needed during periods of heightened demand. Depending on the oxidative conditions of tissues and cells, and in addition to its ability to bind oxygen, it also has a nitrite reductase activity whereby it regulates the production of bioactive nitric oxide. Under stress conditions, like hypoxia and anoxia, it also protects cells against reactive oxygen species thanks to its pseudoperoxidase activity. The protein is Myoglobin (MB) of Castor fiber (Eurasian beaver).